We begin with the raw amino-acid sequence, 209 residues long: Histidine biosynthesis bifunctional protein HisIE (209 aa).

The phosphoribosyl-AMP cyclohydrolase stretch occupies residues 1-123; it reads MEIEKLLEQV…VLPIDYSLSI (123 aa). The phosphoribosyl-ATP pyrophosphohydrolase stretch occupies residues 124–209; the sequence is LKELEEIIKR…VMNELRRRRK (86 aa).

The protein in the N-terminal section; belongs to the PRA-CH family. It in the C-terminal section; belongs to the PRA-PH family.

The protein localises to the cytoplasm. The enzyme catalyses 1-(5-phospho-beta-D-ribosyl)-ATP + H2O = 1-(5-phospho-beta-D-ribosyl)-5'-AMP + diphosphate + H(+). The catalysed reaction is 1-(5-phospho-beta-D-ribosyl)-5'-AMP + H2O = 1-(5-phospho-beta-D-ribosyl)-5-[(5-phospho-beta-D-ribosylamino)methylideneamino]imidazole-4-carboxamide. Its pathway is amino-acid biosynthesis; L-histidine biosynthesis; L-histidine from 5-phospho-alpha-D-ribose 1-diphosphate: step 2/9. It participates in amino-acid biosynthesis; L-histidine biosynthesis; L-histidine from 5-phospho-alpha-D-ribose 1-diphosphate: step 3/9. The sequence is that of Histidine biosynthesis bifunctional protein HisIE (hisI) from Pyrococcus furiosus (strain ATCC 43587 / DSM 3638 / JCM 8422 / Vc1).